A 197-amino-acid polypeptide reads, in one-letter code: Tic20 family protein Ycf60 (197 aa).

The next 5 membrane-spanning stretches (helical) occupy residues isoleucine 3–valine 23, phenylalanine 47–leucine 66, leucine 81–phenylalanine 101, valine 118–leucine 138, and methionine 141–glycine 161.

The protein belongs to the Tic20 family.

It localises to the plastid. Its subcellular location is the chloroplast membrane. This is Tic20 family protein Ycf60 (ycf60) from Cyanidioschyzon merolae (strain NIES-3377 / 10D) (Unicellular red alga).